The chain runs to 432 residues: Glutamate-1-semialdehyde 2,1-aminomutase (432 aa).

Lys-269 carries the post-translational modification N6-(pyridoxal phosphate)lysine.

The protein belongs to the class-III pyridoxal-phosphate-dependent aminotransferase family. HemL subfamily. As to quaternary structure, homodimer. It depends on pyridoxal 5'-phosphate as a cofactor.

The protein resides in the cytoplasm. The catalysed reaction is (S)-4-amino-5-oxopentanoate = 5-aminolevulinate. It functions in the pathway porphyrin-containing compound metabolism; protoporphyrin-IX biosynthesis; 5-aminolevulinate from L-glutamyl-tRNA(Glu): step 2/2. The protein is Glutamate-1-semialdehyde 2,1-aminomutase of Desulforamulus reducens (strain ATCC BAA-1160 / DSM 100696 / MI-1) (Desulfotomaculum reducens).